The chain runs to 260 residues: Histidine-binding periplasmic protein (260 aa).

The signal sequence occupies residues 1-22; the sequence is MKKLALSLSLVLAFSSATAAFA. Cysteines 60 and 67 form a disulfide. The L-histidine site is built by Ser91, Ser92, Ser94, Arg99, Thr143, and Asp183.

The protein belongs to the bacterial solute-binding protein 3 family. In terms of assembly, the complex is composed of two ATP-binding proteins (HisP), two transmembrane proteins (HisM and HisQ) and a solute-binding protein (HisJ).

It localises to the periplasm. Functionally, part of the ABC transporter complex HisPMQJ involved in histidine transport. Binds histidine. Interacts with HisQMP and stimulates ATPase activity of HisP, which results in histidine translocation. May have some additional function(s) in translocation that is independent of the stimulation of ATP hydrolysis. This is Histidine-binding periplasmic protein from Salmonella typhimurium (strain LT2 / SGSC1412 / ATCC 700720).